We begin with the raw amino-acid sequence, 158 residues long: Mitotic-spindle organizing protein 2B (158 aa).

Phosphoserine is present on Ser-34. A disordered region spans residues 84–158 (RLASEPQDPA…PGKSPTRGST (75 aa)). Low complexity predominate over residues 111–122 (GSAALGGALALA). The span at 128–140 (EGSSQRMPRQPSA) shows a compositional bias: polar residues. Ser-152 is subject to Phosphoserine.

Belongs to the MOZART2 family. Associates with the gamma-tubulin ring complex (gTuRC) consisting of TUBGCP2, TUBGCP3, TUBGCP4, TUBGCP5 and TUBGCP6 and gamma-tubulin TUBG1 or TUBG2; within the complex, interacts with TUBGCP2; the interaction plays a role in gTuRC activation. Interacts with TUBG1.

It is found in the cytoplasm. Its subcellular location is the cytoskeleton. The protein localises to the microtubule organizing center. It localises to the centrosome. The protein resides in the spindle. Its function is as follows. Required for the recruitment and the assembly of the gamma-tubulin ring complex (gTuRC) at the centrosome. The gTuRC regulates the minus-end nucleation of alpha-beta tubulin heterodimers that grow into microtubule protafilaments, a critical step in centrosome duplication and spindle formation. The protein is Mitotic-spindle organizing protein 2B (MZT2B) of Homo sapiens (Human).